Consider the following 192-residue polypeptide: uncharacterized protein (192 aa).

Residues 29–160 (QRQAAVLVPI…PLDIHRRGND (132 aa)) form the Nudix hydrolase domain. The Nudix box signature appears at 67–89 (GAVDNTDATLIAAALREAQEEVA). Residues E83 and E87 each contribute to the Mg(2+) site.

It belongs to the Nudix hydrolase family. PCD1 subfamily. The cofactor is Mn(2+). Requires Mg(2+) as cofactor.

Functionally, probably mediates the hydrolysis of some nucleoside diphosphate derivatives. This is an uncharacterized protein from Klebsiella pneumoniae subsp. pneumoniae (strain ATCC 700721 / MGH 78578).